We begin with the raw amino-acid sequence, 82 residues long: ATP synthase subunit 9, mitochondrial (82 aa).

2 consecutive transmembrane segments (helical) span residues 8–28 (IGAG…GNVF) and 45–67 (SFGY…PMMA).

This sequence belongs to the ATPase C chain family. As to quaternary structure, F-type ATPases have 2 components, CF(1) - the catalytic core - and CF(0) - the membrane proton channel. CF(1) has five subunits: alpha(3), beta(3), gamma(1), delta(1), epsilon(1). CF(0) has three main subunits: a, b and c.

The protein resides in the mitochondrion membrane. In terms of biological role, this protein is one of the chains of the nonenzymatic membrane component (F0) of mitochondrial ATPase. This Malus domestica (Apple) protein is ATP synthase subunit 9, mitochondrial (ATP9).